Reading from the N-terminus, the 156-residue chain is Ribosomal RNA large subunit methyltransferase H (156 aa).

L72 and G104 together coordinate S-adenosyl-L-methionine.

It belongs to the RNA methyltransferase RlmH family. As to quaternary structure, homodimer.

The protein localises to the cytoplasm. The enzyme catalyses pseudouridine(1915) in 23S rRNA + S-adenosyl-L-methionine = N(3)-methylpseudouridine(1915) in 23S rRNA + S-adenosyl-L-homocysteine + H(+). Functionally, specifically methylates the pseudouridine at position 1915 (m3Psi1915) in 23S rRNA. The sequence is that of Ribosomal RNA large subunit methyltransferase H from Maricaulis maris (strain MCS10) (Caulobacter maris).